A 714-amino-acid chain; its full sequence is Polyribonucleotide nucleotidyltransferase (714 aa).

2 residues coordinate Mg(2+): aspartate 488 and aspartate 494. Positions 555–614 (PRIEVMNIPTDKIRDVIGSGGKVIREIVEKTGAKINIEDDGTVKIASSNGKEIEAAKKWI) constitute a KH domain. An S1 motif domain is found at 624 to 692 (GEIYEGTVVK…ERGKVRLSMK (69 aa)).

This sequence belongs to the polyribonucleotide nucleotidyltransferase family. Mg(2+) serves as cofactor.

The protein resides in the cytoplasm. The catalysed reaction is RNA(n+1) + phosphate = RNA(n) + a ribonucleoside 5'-diphosphate. Its function is as follows. Involved in mRNA degradation. Catalyzes the phosphorolysis of single-stranded polyribonucleotides processively in the 3'- to 5'-direction. The chain is Polyribonucleotide nucleotidyltransferase from Brucella suis biovar 1 (strain 1330).